A 445-amino-acid polypeptide reads, in one-letter code: GTPase Der (445 aa).

2 EngA-type G domains span residues 3–166 (PVIA…AERV) and 180–353 (IRIG…ESCY). GTP contacts are provided by residues 9 to 16 (GRPNVGKS), 56 to 60 (DTGGI), 118 to 121 (NKTD), 186 to 193 (GRPNVGKS), 233 to 237 (DTAGI), and 298 to 301 (NKWD). A KH-like domain is found at 354-438 (AKWTTNRLTR…PIIFEFKSAE (85 aa)).

It belongs to the TRAFAC class TrmE-Era-EngA-EngB-Septin-like GTPase superfamily. EngA (Der) GTPase family. Associates with the 50S ribosomal subunit.

Its function is as follows. GTPase that plays an essential role in the late steps of ribosome biogenesis. In Marinomonas sp. (strain MWYL1), this protein is GTPase Der.